A 462-amino-acid polypeptide reads, in one-letter code: UDP-N-acetylmuramate--L-alanine ligase (462 aa).

114–120 lines the ATP pocket; it reads GSHGKTT.

It belongs to the MurCDEF family.

The protein localises to the cytoplasm. The enzyme catalyses UDP-N-acetyl-alpha-D-muramate + L-alanine + ATP = UDP-N-acetyl-alpha-D-muramoyl-L-alanine + ADP + phosphate + H(+). It functions in the pathway cell wall biogenesis; peptidoglycan biosynthesis. Its function is as follows. Cell wall formation. This chain is UDP-N-acetylmuramate--L-alanine ligase, found in Brachyspira hyodysenteriae (strain ATCC 49526 / WA1).